A 499-amino-acid chain; its full sequence is MINYSSCSYLLKLCRTLKHLHQFHAQFITSGRISNDFKQNSVFANVLFAITSISPSASASKEVVSYATSVFRFITNPSTFCFNTIIRICTLHEPSSLSSKRFFVEMRRRSVPPDFHTFPFVFKACAAKKNGDLTLVKTLHCQALRFGLLSDLFTLNTLIRVYSLIAPIDSALQLFDENPQRDVVTYNVLIDGLVKAREIVRARELFDSMPLRDLVSWNSLISGYAQMNHCREAIKLFDEMVALGLKPDNVAIVSTLSACAQSGDWQKGKAIHDYTKRKRLFIDSFLATGLVDFYAKCGFIDTAMEIFELCSDKTLFTWNAMITGLAMHGNGELTVDYFRKMVSSGIKPDGVTFISVLVGCSHSGLVDEARNLFDQMRSLYDVNREMKHYGCMADLLGRAGLIEEAAEMIEQMPKDGGNREKLLAWSGLLGGCRIHGNIEIAEKAANRVKALSPEDGGVYKVMVEMYANAERWEEVVKVREIIDRDKKVKKNVGFSKVLS.

PPR repeat units follow at residues 78 to 113 (STFC…SVPP), 114 to 150 (DFHT…GLLS), 151 to 181 (DLFT…NPQR), 182 to 212 (DVVT…MPLR), 213 to 247 (DLVS…GLKP), 248 to 282 (DNVA…RLFI), 283 to 313 (DSFL…CSDK), 314 to 348 (TLFT…GIKP), 349 to 379 (DGVT…MRSL), and 385 to 419 (EMKH…GGNR). Residues 424–499 (AWSGLLGGCR…KNVGFSKVLS (76 aa)) form a type E motif region.

Belongs to the PPR family. PCMP-E subfamily.

This chain is Pentatricopeptide repeat-containing protein At5g61800 (PCMP-E8), found in Arabidopsis thaliana (Mouse-ear cress).